Here is a 258-residue protein sequence, read N- to C-terminus: Imidazole glycerol phosphate synthase subunit HisF (258 aa).

Catalysis depends on residues D11 and D130.

The protein belongs to the HisA/HisF family. As to quaternary structure, heterodimer of HisH and HisF.

The protein localises to the cytoplasm. The enzyme catalyses 5-[(5-phospho-1-deoxy-D-ribulos-1-ylimino)methylamino]-1-(5-phospho-beta-D-ribosyl)imidazole-4-carboxamide + L-glutamine = D-erythro-1-(imidazol-4-yl)glycerol 3-phosphate + 5-amino-1-(5-phospho-beta-D-ribosyl)imidazole-4-carboxamide + L-glutamate + H(+). Its pathway is amino-acid biosynthesis; L-histidine biosynthesis; L-histidine from 5-phospho-alpha-D-ribose 1-diphosphate: step 5/9. Functionally, IGPS catalyzes the conversion of PRFAR and glutamine to IGP, AICAR and glutamate. The HisF subunit catalyzes the cyclization activity that produces IGP and AICAR from PRFAR using the ammonia provided by the HisH subunit. The polypeptide is Imidazole glycerol phosphate synthase subunit HisF (Haemophilus influenzae (strain 86-028NP)).